The following is a 318-amino-acid chain: MFFINILTLLVPILIAMAFLTLVERKILGYMQLRKGPNIVGPYGILQPFADAMKLFMKEPMRPLTTSMSLFIIAPTLSLTLALSLWVPLPMPHPLINLNLGILFILATSSLSVYSILWSGWASNSKYSLFGALRAVAQTISYEVTMAIILLSVLLMNGSYSLQTLITTQEHMWLLLPAWPMAMMWFISTLAETNRAPFDLTEGESELVSGFNVEYAAGPFALFFMAEYTNIILMNALTTIIFLGPLYYINLPELYSTNFMMEALLLSSTFLWIRASYPRFRYDQLMHLLWKNFLPLTLALCMWHISLPIFTAGVPPYM.

A run of 8 helical transmembrane segments spans residues Phe-2–Leu-22, Leu-70–Pro-90, Leu-100–Gly-120, Val-136–Met-156, His-171–Ala-191, Ile-231–Leu-251, Glu-253–Ile-273, and Phe-293–Gly-313.

This sequence belongs to the complex I subunit 1 family. As to quaternary structure, core subunit of respiratory chain NADH dehydrogenase (Complex I) which is composed of 45 different subunits.

Its subcellular location is the mitochondrion inner membrane. It catalyses the reaction a ubiquinone + NADH + 5 H(+)(in) = a ubiquinol + NAD(+) + 4 H(+)(out). Core subunit of the mitochondrial membrane respiratory chain NADH dehydrogenase (Complex I) which catalyzes electron transfer from NADH through the respiratory chain, using ubiquinone as an electron acceptor. Essential for the catalytic activity and assembly of complex I. This is NADH-ubiquinone oxidoreductase chain 1 (Mtnd1) from Mus musculus (Mouse).